The following is a 352-amino-acid chain: 4-hydroxy-2-oxovalerate aldolase (352 aa).

In terms of domain architecture, Pyruvate carboxyltransferase spans 14 to 266; it reads VRMTDTSLRD…KTGIDFFDIA (253 aa). 22-23 contributes to the substrate binding site; it reads RD. Position 23 (Asp23) interacts with Mn(2+). The active-site Proton acceptor is His26. Substrate-binding residues include Ser176 and His205. The Mn(2+) site is built by His205 and His207. Tyr296 is a binding site for substrate.

It belongs to the 4-hydroxy-2-oxovalerate aldolase family.

The catalysed reaction is (S)-4-hydroxy-2-oxopentanoate = acetaldehyde + pyruvate. The sequence is that of 4-hydroxy-2-oxovalerate aldolase from Mycolicibacterium gilvum (strain PYR-GCK) (Mycobacterium gilvum (strain PYR-GCK)).